The primary structure comprises 270 residues: Thiamine thiazole synthase (270 aa).

Residues Ala-39, 58 to 59 (EQ), Gly-66, and Leu-130 each bind NAD(+). Cys-159 carries the 2,3-didehydroalanine (Cys) modification. Asp-161 contributes to the NAD(+) binding site. Residues Asp-161 and His-176 each coordinate Fe cation. An NAD(+)-binding site is contributed by Ile-223. Arg-233 provides a ligand contact to glycine.

Belongs to the THI4 family. Homooctamer; tetramer of dimers. The cofactor is Fe(2+). During the catalytic reaction, a sulfide is transferred from Cys-159 to a reaction intermediate, generating a dehydroalanine residue.

It catalyses the reaction [ADP-thiazole synthase]-L-cysteine + glycine + NAD(+) = [ADP-thiazole synthase]-dehydroalanine + ADP-5-ethyl-4-methylthiazole-2-carboxylate + nicotinamide + 3 H2O + 2 H(+). The protein operates within cofactor biosynthesis; thiamine diphosphate biosynthesis. In terms of biological role, involved in biosynthesis of the thiamine precursor thiazole. Catalyzes the conversion of NAD and glycine to adenosine diphosphate 5-(2-hydroxyethyl)-4-methylthiazole-2-carboxylic acid (ADT), an adenylated thiazole intermediate. The reaction includes an iron-dependent sulfide transfer from a conserved cysteine residue of the protein to a thiazole intermediate. The enzyme can only undergo a single turnover, which suggests it is a suicide enzyme. The sequence is that of Thiamine thiazole synthase from Aeropyrum pernix (strain ATCC 700893 / DSM 11879 / JCM 9820 / NBRC 100138 / K1).